The primary structure comprises 293 residues: 4-diphosphocytidyl-2-C-methyl-D-erythritol kinase (293 aa).

The active site involves Lys16. 99 to 109 lines the ATP pocket; sequence PMGAGLGGGSS. Asp141 is an active-site residue.

Belongs to the GHMP kinase family. IspE subfamily.

It carries out the reaction 4-CDP-2-C-methyl-D-erythritol + ATP = 4-CDP-2-C-methyl-D-erythritol 2-phosphate + ADP + H(+). It participates in isoprenoid biosynthesis; isopentenyl diphosphate biosynthesis via DXP pathway; isopentenyl diphosphate from 1-deoxy-D-xylulose 5-phosphate: step 3/6. Its function is as follows. Catalyzes the phosphorylation of the position 2 hydroxy group of 4-diphosphocytidyl-2C-methyl-D-erythritol. The sequence is that of 4-diphosphocytidyl-2-C-methyl-D-erythritol kinase from Paraburkholderia phymatum (strain DSM 17167 / CIP 108236 / LMG 21445 / STM815) (Burkholderia phymatum).